Reading from the N-terminus, the 736-residue chain is Dynamin-1-like protein (736 aa).

An N-acetylmethionine modification is found at Met-1. Residues 22–302 enclose the Dynamin-type G domain; that stretch reads IIQLPQIVVV…LMHHIRDCLP (281 aa). The segment at 32-39 is G1 motif; sequence GTQSSGKS. 32 to 40 provides a ligand contact to GTP; it reads GTQSSGKSS. The interval 58–60 is G2 motif; it reads VTR. Residues 146 to 149 are G3 motif; it reads DLPG. Positions 215 to 218 are G4 motif; that stretch reads TKLD. Residues 215 to 221 and 246 to 249 each bind GTP; these read TKLDLMD and NRSQ. The tract at residues 245–248 is G5 motif; that stretch reads VNRS. Positions 344–489 are middle domain; the sequence is YCNTIEGTAK…NEMVHNLVAI (146 aa). The segment at 448–685 is interaction with GSK3B; sequence NYSTQELLRF…NHVKDTLQSE (238 aa). A b domain region spans residues 502-569; that stretch reads ADACGLMNNN…IQDSRRETKN (68 aa). The interval 523–590 is disordered; the sequence is ELPSAVSRDK…VQEPTTGNWR (68 aa). Ser-529 is subject to Phosphoserine. Glycyl lysine isopeptide (Lys-Gly) (interchain with G-Cter in SUMO) cross-links involve residues Lys-532 and Lys-535. A compositionally biased stretch (low complexity) spans 537-554; that stretch reads PSALAPASQEPSPAASAE. Position 548 is a phosphoserine (Ser-548). The segment covering 555-568 has biased composition (basic and acidic residues); the sequence is ADGKLIQDSRRETK. Residues Lys-558 and Lys-568 each participate in a glycyl lysine isopeptide (Lys-Gly) (interchain with G-Cter in SUMO) cross-link. Thr-585 and Thr-586 each carry an O-linked (GlcNAc) threonine glycan. Lys-594 participates in a covalent cross-link: Glycyl lysine isopeptide (Lys-Gly) (interchain with G-Cter in SUMO). Lys-597 carries the post-translational modification N6-acetyllysine; alternate. Lys-597 participates in a covalent cross-link: Glycyl lysine isopeptide (Lys-Gly) (interchain with G-Cter in SUMO); alternate. Lys-606 is covalently cross-linked (Glycyl lysine isopeptide (Lys-Gly) (interchain with G-Cter in SUMO)). A Phosphoserine modification is found at Ser-607. Lys-608 is covalently cross-linked (Glycyl lysine isopeptide (Lys-Gly) (interchain with G-Cter in SUMO)). Ser-616 bears the Phosphoserine; by CDK1 and PINK1 mark. Ser-637 carries the post-translational modification Phosphoserine; by CAMK1 and PKA. Cys-644 bears the S-nitrosocysteine mark. A GED domain is found at 644–735; it reads CEVIERLIKS…IIAEIRETHL (92 aa). The tract at residues 654–668 is important for homodimerization; the sequence is YFLIVRKNIQDSVPK.

The protein belongs to the TRAFAC class dynamin-like GTPase superfamily. Dynamin/Fzo/YdjA family. In terms of assembly, homotetramer; dimerizes through the N-terminal GTP-middle region of one molecule binding to the GED domain of another DNM1L molecule. Oligomerizes in a GTP-dependent manner to form membrane-associated tubules with a spiral pattern. Interacts with GSK3B and MARCHF5. Interacts (via the GTPase and B domains) with UBE2I; the interaction promotes sumoylation of DNM1L, mainly in its B domain. Interacts with PPP3CA; the interaction dephosphorylates DNM1L and regulates its transition to mitochondria. Interacts with BCL2L1 isoform BCL-X(L) and CLTA; DNM1L and BCL2L1 isoform BCL-X(L) may form a complex in synaptic vesicles that also contains clathrin and MFF. Interacts with MFF; the interaction is inhibited by C11orf65/MFI. Interacts with FIS1; may form part of a larger protein complex at the endoplasmic reticulum-mitochondrial interface during mitochondrial fission. Interacts with CANX. Interacts with BCAP31. Interacts with MIEF2 and MIEF1; GTP-dependent, regulates GTP hydrolysis and DNM1L oligomerization. Interacts with PGAM5; this interaction leads to dephosphorylation at Ser-656 and activation of GTPase activity and eventually to mitochondria fragmentation. Interacts with RALBP1; during mitosis, recruits DNM1L to the mitochondrion and mediates its activation by the mitotic kinase cyclin B-CDK1. Interacts with FUNDC1; this interaction recruits DNM1L/DRP1 at ER-mitochondria contact sites. Post-translationally, phosphorylation/dephosphorylation events on two sites near the GED domain regulate mitochondrial fission. Phosphorylation on Ser-637 by CAMK1 and PKA inhibits the GTPase activity, leading to a defect in mitochondrial fission promoting mitochondrial elongation. Dephosphorylated on this site by PPP3CA which promotes mitochondrial fission. Phosphorylation on Ser-616 by CDK1 and PINK1 activates the GTPase activity and promotes mitochondrial fission. Phosphorylated in a circadian manner at Ser-637. Dephosphorylated by PGAM5. Sumoylated on various lysine residues within the B domain, probably by MUL1. Sumoylation positively regulates mitochondrial fission. Desumoylated by SENP5 during G2/M transition of mitosis. Appears to be linked to its catalytic activity. In terms of processing, S-nitrosylation increases DNM1L dimerization, mitochondrial fission and causes neuronal damage. Post-translationally, ubiquitination by MARCHF5 affects mitochondrial morphology. O-GlcNAcylation augments the level of the GTP-bound active form of DNM1L and induces translocation from the cytoplasm to mitochondria in cardiomyocytes. It also decreases phosphorylation at Ser-637. In terms of tissue distribution, ubiquitously expressed with highest levels found in skeletal muscles, heart, kidney and brain. Isoform 1 is brain-specific. Isoform 2 and isoform 3 are predominantly expressed in testis and skeletal muscles respectively. Isoform 4 is weakly expressed in brain, heart and kidney. Isoform 5 is dominantly expressed in liver, heart and kidney. Isoform 6 is expressed in neurons.

The protein localises to the cytoplasm. Its subcellular location is the cytosol. It localises to the golgi apparatus. The protein resides in the endomembrane system. It is found in the mitochondrion outer membrane. The protein localises to the peroxisome. Its subcellular location is the membrane. It localises to the clathrin-coated pit. The protein resides in the cytoplasmic vesicle. It is found in the secretory vesicle. The protein localises to the synaptic vesicle membrane. It carries out the reaction GTP + H2O = GDP + phosphate + H(+). With respect to regulation, GTPase activity is increased by binding to phospholipid membranes. Functions in mitochondrial and peroxisomal division. Mediates membrane fission through oligomerization into membrane-associated tubular structures that wrap around the scission site to constrict and sever the mitochondrial membrane through a GTP hydrolysis-dependent mechanism. The specific recruitment at scission sites is mediated by membrane receptors like MFF, MIEF1 and MIEF2 for mitochondrial membranes. While the recruitment by the membrane receptors is GTP-dependent, the following hydrolysis of GTP induces the dissociation from the receptors and allows DNM1L filaments to curl into closed rings that are probably sufficient to sever a double membrane. Acts downstream of PINK1 to promote mitochondrial fission in a PRKN-dependent manner. Plays an important role in mitochondrial fission during mitosis. Through its function in mitochondrial division, ensures the survival of at least some types of postmitotic neurons, including Purkinje cells, by suppressing oxidative damage. Required for normal brain development, including that of cerebellum. Facilitates developmentally regulated apoptosis during neural tube formation. Required for a normal rate of cytochrome c release and caspase activation during apoptosis; this requirement may depend upon the cell type and the physiological apoptotic cues. Required for formation of endocytic vesicles. Proposed to regulate synaptic vesicle membrane dynamics through association with BCL2L1 isoform Bcl-X(L) which stimulates its GTPase activity in synaptic vesicles; the function may require its recruitment by MFF to clathrin-containing vesicles. Required for programmed necrosis execution. Rhythmic control of its activity following phosphorylation at Ser-637 is essential for the circadian control of mitochondrial ATP production. Its function is as follows. Inhibits peroxisomal division when overexpressed. This chain is Dynamin-1-like protein, found in Homo sapiens (Human).